Here is a 1188-residue protein sequence, read N- to C-terminus: Zinc finger SWIM domain-containing protein 5 (1188 aa).

A compositionally biased stretch (basic and acidic residues) spans 1 to 10 (MAEGGEREEL). 2 disordered regions span residues 1 to 46 (MAEG…GAGG) and 123 to 171 (AGAA…TGTA). Composition is skewed to low complexity over residues 126 to 136 (AAGAAGASPVE) and 146 to 155 (AAPAGSAPGA). Residues 156–171 (AGAGSSPGLGAGTGTA) show a composition bias toward gly residues. The SWIM-type zinc finger occupies 222–259 (YKVAISFDRCKITSVSCGCGNKDIFYCAHVVALSLYRI).

This is Zinc finger SWIM domain-containing protein 5 (Zswim5) from Mus musculus (Mouse).